The sequence spans 129 residues: Fluoride-specific ion channel FluC (129 aa).

A run of 4 helical transmembrane segments spans residues 6-26 (ILAI…FNGI), 35-55 (IPFG…ILIA), 73-93 (TGVL…FLLL), and 98-118 (IALA…MAGG). Gly-77 and Thr-80 together coordinate Na(+).

The protein belongs to the fluoride channel Fluc/FEX (TC 1.A.43) family.

Its subcellular location is the cell inner membrane. It carries out the reaction fluoride(in) = fluoride(out). Na(+) is not transported, but it plays an essential structural role and its presence is essential for fluoride channel function. Functionally, fluoride-specific ion channel. Important for reducing fluoride concentration in the cell, thus reducing its toxicity. The polypeptide is Fluoride-specific ion channel FluC (Sulfurimonas denitrificans (strain ATCC 33889 / DSM 1251) (Thiomicrospira denitrificans (strain ATCC 33889 / DSM 1251))).